Consider the following 164-residue polypeptide: MRFSISALVLGLAATVYALPPGAPSAGGAGSGNGVGNKGNTDVRFSVPDNMTVKQAQAECGDQAQLSCCNKAVYAGDTTDINSGILGGTLSNLIGSGSGASGLGLFDQCSKLDLQIPVLIGIPIQDLINQKCKQNIACCQNSPSSANSDLIGLGLPCVALGSIL.

The N-terminal stretch at 1–18 (MRFSISALVLGLAATVYA) is a signal peptide. N-linked (GlcNAc...) asparagine glycosylation is present at asparagine 50. Intrachain disulfides connect cysteine 60-cysteine 138, cysteine 68-cysteine 132, cysteine 69-cysteine 109, and cysteine 139-cysteine 157.

The protein belongs to the fungal hydrophobin family. In terms of assembly, self-assembles to form functional amyloid fibrils called rodlets. Self-assembly into fibrillar rodlets occurs spontaneously at hydrophobic:hydrophilic interfaces and the rodlets further associate laterally to form amphipathic monolayers.

The protein resides in the secreted. Its subcellular location is the cell wall. Its function is as follows. Aerial growth, conidiation, and dispersal of filamentous fungi in the environment rely upon a capability of their secreting small amphipathic proteins called hydrophobins (HPBs) with low sequence identity. Class I can self-assemble into an outermost layer of rodlet bundles on aerial cell surfaces, conferring cellular hydrophobicity that supports fungal growth, development and dispersal; whereas Class II form highly ordered films at water-air interfaces through intermolecular interactions but contribute nothing to the rodlet structure. RodA is a class I hydrophobin involved in the cell surface hydrophobicity and conidiation under aerial conditions. The surface rodlet layer of the conidial cell wall makes airborne conidia of filamentous fungi inert to both innate and adaptive immunity. The polypeptide is Class I hydrophobin rodA (Penicillium camembertii).